We begin with the raw amino-acid sequence, 71 residues long: Sodium channel neurotoxin MeuNaTxalpha-12 (71 aa).

The N-terminal stretch at 1 to 6 (MTGVES) is a signal peptide. The 63-residue stretch at 8–70 (RDAYIAQGNN…VPIRIQGKCQ (63 aa)) folds into the LCN-type CS-alpha/beta domain. Intrachain disulfides connect cysteine 18–cysteine 69, cysteine 22–cysteine 42, cysteine 28–cysteine 52, and cysteine 32–cysteine 54. Residue arginine 71 is a propeptide, removed by a carboxypeptidase.

Belongs to the long (4 C-C) scorpion toxin superfamily. Sodium channel inhibitor family. Alpha subfamily. In terms of tissue distribution, expressed by the venom gland.

It is found in the secreted. In terms of biological role, alpha toxins bind voltage-independently at site-3 of sodium channels (Nav) and inhibit the inactivation of the activated channels, thereby blocking neuronal transmission. This Mesobuthus eupeus (Lesser Asian scorpion) protein is Sodium channel neurotoxin MeuNaTxalpha-12.